The following is a 1180-amino-acid chain: RecBCD enzyme subunit RecB (1180 aa).

The DNA-binding and helicase activity, interacts with RecC stretch occupies residues 1–852 (MITTIPKSIN…QSGKNHISTK (852 aa)). Positions 3 to 448 (TTIPKSINVT…YFLDTNWRSS (446 aa)) constitute a UvrD-like helicase ATP-binding domain. An ATP-binding site is contributed by 24–31 (ASAGTGKT). Residues 478-745 (SSRINKTTKF…KIVSIHKSKG (268 aa)) enclose the UvrD-like helicase C-terminal domain. The nuclease activity, interacts with RecD and RecA stretch occupies residues 905-1180 (NYNFTSYSQL…EIIKKLEQIF (276 aa)). Mg(2+)-binding residues include His-964, Asp-1075, and Asp-1088. Residue Asp-1088 is the For nuclease activity of the active site.

Belongs to the helicase family. UvrD subfamily. Heterotrimer of RecB, RecC and RecD. All subunits contribute to DNA-binding. Interacts with RecA. Requires Mg(2+) as cofactor.

It carries out the reaction Exonucleolytic cleavage (in the presence of ATP) in either 5'- to 3'- or 3'- to 5'-direction to yield 5'-phosphooligonucleotides.. The enzyme catalyses Couples ATP hydrolysis with the unwinding of duplex DNA by translocating in the 3'-5' direction.. The catalysed reaction is ATP + H2O = ADP + phosphate + H(+). Functionally, a helicase/nuclease that prepares dsDNA breaks (DSB) for recombinational DNA repair. Binds to DSBs and unwinds DNA via a highly rapid and processive ATP-dependent bidirectional helicase activity. Unwinds dsDNA until it encounters a Chi (crossover hotspot instigator) sequence from the 3' direction. Cuts ssDNA a few nucleotides 3' to the Chi site. The properties and activities of the enzyme are changed at Chi. The Chi-altered holoenzyme produces a long 3'-ssDNA overhang and facilitates RecA-binding to the ssDNA for homologous DNA recombination and repair. Holoenzyme degrades any linearized DNA that is unable to undergo homologous recombination. In the holoenzyme this subunit contributes ATPase, 3'-5' helicase, exonuclease activity and loads RecA onto ssDNA. In Buchnera aphidicola subsp. Baizongia pistaciae (strain Bp), this protein is RecBCD enzyme subunit RecB.